The sequence spans 169 residues: Transcription antitermination protein NusB (169 aa).

Residues 147 to 169 form a disordered region; the sequence is RGLIDQSFSRPQKPESEATEIEE.

The protein belongs to the NusB family.

Functionally, involved in transcription antitermination. Required for transcription of ribosomal RNA (rRNA) genes. Binds specifically to the boxA antiterminator sequence of the ribosomal RNA (rrn) operons. This chain is Transcription antitermination protein NusB, found in Chlorobium chlorochromatii (strain CaD3).